The primary structure comprises 380 residues: Alpha-glucoside transport system permease protein AglG (380 aa).

Transmembrane regions (helical) follow at residues 13-33 (VHLS…GLLI), 179-199 (VIPI…PFPG), 202-222 (VLLA…LIPL), 239-259 (TYMG…IYLL), 288-308 (IILP…FLWT), and 344-364 (EILT…FFAL). An ABC transmembrane type-1 domain is found at 167–364 (FLNSLTVAVP…VVPLIVFFAL (198 aa)).

It belongs to the binding-protein-dependent transport system permease family. MalFG subfamily.

The protein localises to the cell inner membrane. In terms of biological role, part of the binding-protein-dependent transport system for alpha-glucosides such as sucrose, maltose and trehalose. Probably responsible for the translocation of the substrate across the membrane. The chain is Alpha-glucoside transport system permease protein AglG (aglG) from Rhizobium meliloti (strain 1021) (Ensifer meliloti).